The chain runs to 353 residues: Photosystem II protein D1 (353 aa).

An N-acetylthreonine modification is found at T2. Residue T2 is modified to Phosphothreonine. The next 3 membrane-spanning stretches (helical) occupy residues 29-46 (YIGW…TATS), 118-133 (HFLL…EWEL), and 142-156 (WIAV…AATA). H118 is a binding site for chlorophyll a. Residue Y126 participates in pheophytin a binding. [CaMn4O5] cluster-binding residues include D170 and E189. Residues 197–218 (FHMLGVAGVFGGSLFSAMHGSL) traverse the membrane as a helical segment. H198 contributes to the chlorophyll a binding site. Residues H215 and 264 to 265 (SF) each bind a quinone. H215 contacts Fe cation. H272 contacts Fe cation. The chain crosses the membrane as a helical span at residues 274-288 (FLAAWPVVGIWFTAL). 4 residues coordinate [CaMn4O5] cluster: H332, E333, D342, and A344. A propeptide spanning residues 345 to 353 (ALEVPYLNG) is cleaved from the precursor.

The protein belongs to the reaction center PufL/M/PsbA/D family. In terms of assembly, PSII is composed of 1 copy each of membrane proteins PsbA, PsbB, PsbC, PsbD, PsbE, PsbF, PsbH, PsbI, PsbJ, PsbK, PsbL, PsbM, PsbT, PsbX, PsbY, PsbZ, Psb30/Ycf12, at least 3 peripheral proteins of the oxygen-evolving complex and a large number of cofactors. It forms dimeric complexes. The D1/D2 heterodimer binds P680, chlorophylls that are the primary electron donor of PSII, and subsequent electron acceptors. It shares a non-heme iron and each subunit binds pheophytin, quinone, additional chlorophylls, carotenoids and lipids. D1 provides most of the ligands for the Mn4-Ca-O5 cluster of the oxygen-evolving complex (OEC). There is also a Cl(-1) ion associated with D1 and D2, which is required for oxygen evolution. The PSII complex binds additional chlorophylls, carotenoids and specific lipids. is required as a cofactor. Post-translationally, phosphorylated in both bundle sheath and mesophyll cells, phosphorylation increases when cells are grown under high rather than low light regimes (70 vs 900 umol photons/m-2/s). PSII is subject to light-induced damage, in particular to D1. Damaged protein is degraded by Deg1 and FtsH proteases and replaced. In maize mesophyll cells D1 degradation is less extensive in grana (stacked) vs stroma (unstacked) lamellae, in part due to exclusion of FtsH from the grana. D1 degradation is faster in bundle sheath cells. In terms of processing, tyr-161 forms a radical intermediate that is referred to as redox-active TyrZ, YZ or Y-Z. Post-translationally, C-terminally processed by CTPA; processing is essential to allow assembly of the oxygen-evolving complex and thus photosynthetic growth.

Its subcellular location is the plastid. The protein localises to the chloroplast thylakoid membrane. It carries out the reaction 2 a plastoquinone + 4 hnu + 2 H2O = 2 a plastoquinol + O2. In terms of biological role, photosystem II (PSII) is a light-driven water:plastoquinone oxidoreductase that uses light energy to abstract electrons from H(2)O, generating O(2) and a proton gradient subsequently used for ATP formation. It consists of a core antenna complex that captures photons, and an electron transfer chain that converts photonic excitation into a charge separation. The D1/D2 (PsbA/PsbD) reaction center heterodimer binds P680, the primary electron donor of PSII as well as several subsequent electron acceptors. In Zea mays (Maize), this protein is Photosystem II protein D1.